A 142-amino-acid chain; its full sequence is UPF0179 protein PYRAB06360 (142 aa).

This sequence belongs to the UPF0179 family.

The protein is UPF0179 protein PYRAB06360 of Pyrococcus abyssi (strain GE5 / Orsay).